A 273-amino-acid chain; its full sequence is Putative phosphoenolpyruvate synthase regulatory protein (273 aa).

Residue 153 to 160 (GVSRSGKT) participates in ADP binding.

Belongs to the pyruvate, phosphate/water dikinase regulatory protein family. PSRP subfamily.

The enzyme catalyses [pyruvate, water dikinase] + ADP = [pyruvate, water dikinase]-phosphate + AMP + H(+). The catalysed reaction is [pyruvate, water dikinase]-phosphate + phosphate + H(+) = [pyruvate, water dikinase] + diphosphate. In terms of biological role, bifunctional serine/threonine kinase and phosphorylase involved in the regulation of the phosphoenolpyruvate synthase (PEPS) by catalyzing its phosphorylation/dephosphorylation. This chain is Putative phosphoenolpyruvate synthase regulatory protein, found in Polaromonas sp. (strain JS666 / ATCC BAA-500).